The primary structure comprises 86 residues: Small ribosomal subunit protein uS15 (86 aa).

Belongs to the universal ribosomal protein uS15 family. In terms of assembly, part of the 30S ribosomal subunit. Forms a bridge to the 50S subunit in the 70S ribosome, contacting the 23S rRNA.

One of the primary rRNA binding proteins, it binds directly to 16S rRNA where it helps nucleate assembly of the platform of the 30S subunit by binding and bridging several RNA helices of the 16S rRNA. Its function is as follows. Forms an intersubunit bridge (bridge B4) with the 23S rRNA of the 50S subunit in the ribosome. The sequence is that of Small ribosomal subunit protein uS15 from Mycoplasma genitalium (strain ATCC 33530 / DSM 19775 / NCTC 10195 / G37) (Mycoplasmoides genitalium).